Here is a 387-residue protein sequence, read N- to C-terminus: Succinate--CoA ligase [ADP-forming] subunit beta (387 aa).

One can recognise an ATP-grasp domain in the interval 9–236 (KELFAKHNVP…KDATDPLELK (228 aa)). Residues lysine 45, 52-54 (GRG), serine 94, and glutamate 99 contribute to the ATP site. 2 residues coordinate Mg(2+): asparagine 191 and aspartate 205. Residues asparagine 256 and 318-320 (GIT) each bind substrate.

The protein belongs to the succinate/malate CoA ligase beta subunit family. As to quaternary structure, heterotetramer of two alpha and two beta subunits. Mg(2+) serves as cofactor.

It catalyses the reaction succinate + ATP + CoA = succinyl-CoA + ADP + phosphate. The catalysed reaction is GTP + succinate + CoA = succinyl-CoA + GDP + phosphate. It participates in carbohydrate metabolism; tricarboxylic acid cycle; succinate from succinyl-CoA (ligase route): step 1/1. Its function is as follows. Succinyl-CoA synthetase functions in the citric acid cycle (TCA), coupling the hydrolysis of succinyl-CoA to the synthesis of either ATP or GTP and thus represents the only step of substrate-level phosphorylation in the TCA. The beta subunit provides nucleotide specificity of the enzyme and binds the substrate succinate, while the binding sites for coenzyme A and phosphate are found in the alpha subunit. This chain is Succinate--CoA ligase [ADP-forming] subunit beta, found in Mycolicibacterium vanbaalenii (strain DSM 7251 / JCM 13017 / BCRC 16820 / KCTC 9966 / NRRL B-24157 / PYR-1) (Mycobacterium vanbaalenii).